We begin with the raw amino-acid sequence, 139 residues long: MKKNTLLNSELSYIIATLGHTDEITICDAGLPIPDASQRIDLALIQGIPTFIDTVKATLAEMQIEGVIVAEEFKTVSPQMHDELMTLIAAEEAQCGKSITVSYIPHEEFKIHTRESKAIVRTGECTPYANVIFQSGVVF.

Catalysis depends on His-20, which acts as the Proton donor. Substrate is bound by residues Asp-28, His-106, and 128–130 (YAN).

The protein belongs to the RbsD / FucU family. RbsD subfamily. As to quaternary structure, homodecamer.

The protein resides in the cytoplasm. The catalysed reaction is beta-D-ribopyranose = beta-D-ribofuranose. It participates in carbohydrate metabolism; D-ribose degradation; D-ribose 5-phosphate from beta-D-ribopyranose: step 1/2. Catalyzes the interconversion of beta-pyran and beta-furan forms of D-ribose. This is D-ribose pyranase from Aliivibrio fischeri (strain MJ11) (Vibrio fischeri).